A 620-amino-acid polypeptide reads, in one-letter code: mRNA cap guanine-N(7) methyltransferase (620 aa).

2 disordered regions span residues 1–176 (MLPP…APSS) and 193–304 (AHAN…DDEY). Polar residues predominate over residues 29 to 44 (RSPSMSLSPRSQNQSL). Composition is skewed to low complexity over residues 45–60 (PYPS…SAHP) and 136–157 (PQPT…TPHH). One can recognise an mRNA cap 0 methyltransferase domain in the interval 345 to 620 (SPIIGLKKFN…LYMGFAFEKM (276 aa)). 354 to 355 (NN) is a binding site for mRNA. Residues lysine 358, glycine 377, aspartate 399, aspartate 428, glutamine 454, and tyrosine 459 each contribute to the S-adenosyl-L-methionine site.

It belongs to the class I-like SAM-binding methyltransferase superfamily. mRNA cap 0 methyltransferase family.

The protein localises to the nucleus. The enzyme catalyses a 5'-end (5'-triphosphoguanosine)-ribonucleoside in mRNA + S-adenosyl-L-methionine = a 5'-end (N(7)-methyl 5'-triphosphoguanosine)-ribonucleoside in mRNA + S-adenosyl-L-homocysteine. Its function is as follows. Responsible for methylating the 5'-cap structure of mRNAs. The polypeptide is mRNA cap guanine-N(7) methyltransferase (ABD1) (Cryptococcus neoformans var. neoformans serotype D (strain JEC21 / ATCC MYA-565) (Filobasidiella neoformans)).